We begin with the raw amino-acid sequence, 146 residues long: Probable acetyltransferase HI_0677 (146 aa).

An N-acetyltransferase domain is found at 1-146 (MKLFKAEQWN…ERLFELSLSC (146 aa)).

The chain is Probable acetyltransferase HI_0677 from Haemophilus influenzae (strain ATCC 51907 / DSM 11121 / KW20 / Rd).